A 60-amino-acid polypeptide reads, in one-letter code: Metallothionein A (60 aa).

Positions 1-28 are beta; sequence MDPCECSKSGNCNCGGSCTCTNCSCKSC. A divalent metal cation is bound by residues C4, C6, C12, C14, C18, C20, C23, C25, C28, C32, C33, C35, C36, C40, C43, C47, C49, C54, C58, and C59. Positions 29–60 are alpha; sequence KKSCCPCCPSGCTKCASGCVCIGKTCDTSCCQ.

The protein belongs to the metallothionein superfamily. Type 1 family.

Metallothioneins have a high content of cysteine residues that bind various heavy metals. The chain is Metallothionein A (mta) from Chaenocephalus aceratus (Blackfin icefish).